A 285-amino-acid chain; its full sequence is G patch domain-containing protein 11 (285 aa).

Residues 51-87 (MLRQIREARRKEEKQQEANLKNRQKSLKEEEQERRDI) are a coiled coil. Positions 59–84 (RRKEEKQQEANLKNRQKSLKEEEQER) are disordered. One can recognise a G-patch domain in the interval 95-141 (CENKGFALLQKMGYKSGQALGKSGGGIVEPIPLNIKTGKSGIGHEAS). Ser-141 carries the phosphoserine modification. Lys-149 is modified (N6-acetyllysine). Over residues 218-235 (EETEEDEEEKEQDEDEYK) the composition is skewed to acidic residues. The tract at residues 218 to 237 (EETEEDEEEKEQDEDEYKSE) is disordered.

Belongs to the GPATCH11 family.

It is found in the chromosome. The protein resides in the centromere. It localises to the kinetochore. In Homo sapiens (Human), this protein is G patch domain-containing protein 11 (GPATCH11).